The chain runs to 947 residues: Zinc finger protein 268 (947 aa).

Residues 81 to 152 (LSFMDVFVDF…QAQVPNQTCP (72 aa)) enclose the KRAB domain. Position 178 is a phosphoserine; by TBK1 (Ser-178). 24 C2H2-type zinc fingers span residues 276-298 (FGCSCCEKAFSSKSYLLVHQQTH), 304-326 (YGCNECGKDFSSKSYLIVHQRIH), 332-354 (HECSECRKTFSFHSQLVIHQRIH), 360-382 (YECCECGKVFSRKDQLVSHQKTH), 388-410 (YVCNECGKAFGLKSQLIIHERIH), 416-438 (YECNECQKAFNTKSNLMVHQRTH), 444-466 (YVCSDCGKAFTFKSQLIVHQGIH), 472-494 (YGCIQCGKGFSLKSQLIVHQRSH), 500-522 (YVCNECGKAFRSKSYLIIHTRTH), 528-550 (HECNNCGKAFSFKSQLIIHQRIH), 556-578 (YECHECGKAFSRKYQLISHQRTH), 584-606 (YECTDCGKAFGLKSQLIIHQRTH), 612-634 (FECSECQKAFNTKSNLIVHQRTH), 640-662 (YSCNECGKAFTFKSQLIVHKGVH), 668-690 (YGCSQCAKTFSLKSQLIVHQRSH), 696-718 (YGCSECGKAFRSKSYLIIHMRTH), 724-746 (HECRECGKSFSFNSQLIVHQRIH), 752-774 (YECSECGKAFNRKDQLISHQRTH), 780-802 (YGCSECGKAFSSKSYLIIHMRTH), 808-830 (YECNECGKAFIWKSLLIVHERTH), 836-858 (YKCSQCEKSFSGKLRLLVHQRMH), 864-886 (YECSECGKAFIRNSQLIVHQRTH), 892-914 (YGCNECGKTFSQKSILSAHQRTH), and 920-942 (CKCTECGKAFCWKSQLIMHQRTH).

This sequence belongs to the krueppel C2H2-type zinc-finger protein family. As to quaternary structure, interacts (via the KRAB domain) with TRIM28 (via the RBCC domain); the interaction increases ZNF268 nuclear localization activity. Isoform 2 interacts with CHUK and IKBKB; the interaction is further increased in a TNF-alpha-dependent manner. Interacts with TOLLIP; this interaction is impaired by ZNF268 phosphorylation at Ser-178. Forms a ternary complex with TBK1 and SETD4; the interaction between SETD4 and TBK1 is ZNF268-dependent and leads to TBK1 monomethylation. Phosphorylation at Ser-178 stabilizes the protein by interfering with its binding to TOLLIP, hence impairing its degradation by Tollip-mediated selective autophagy system. As to expression, overexpressed in ovarian cancer tissues compared to normal ovarian tissues. Isoform 1 and isoform 2 are expressed in squamous epithelium tissues. Isoform 2 is overexpressed in squamous cervical cancer (at protein level). Expressed in blood cells. Isoform 1 is expressed in pancreas, lung, skeletal muscle, heart, placenta, liver, kidney and brain. Isoform 2 expressed in chronic lymphocytic leukemia (CLL) and several tumor cell lines. Isoform 3 is expressed in several tumor cells. Isoform 5 is expressed in fetal liver and several tumor cells. Isoform 6 is weakly expressed in brain, lung amd small intestin and in several tumor cells. Isoform 7 is expressed in fetal liver and several tumor cells.

The protein resides in the nucleus. It is found in the cytoplasm. Its function is as follows. Acts as a transcriptional repressor. Inhibits erythroid differentiation and tumor cell proliferation. Plays a role during ovarian cancer development and progression. Contributes to cervical carcinogenesis in part through the TNF-alpha-induced NF-kappa-B signaling pathway by interacting with the I-kappa-B-kinase (IKK) core complex. Functionally, involved in the regulation of antiviral interferon signaling. During viral infection, recruits SETD4 to TBK1, leading to TBK1 monomethylation, which is critical for the assembly of TBK1 complex and IRF3 signaling. The chain is Zinc finger protein 268 (ZNF268) from Homo sapiens (Human).